A 416-amino-acid chain; its full sequence is Phosphoglycerate kinase (416 aa).

Residues Val-23, Asp-24, Phe-25, Asn-26, Gln-38, Arg-39, Ser-62, His-63, Gly-65, Arg-66, Leu-121, Arg-122, His-168, and Arg-169 each contribute to the (2R)-3-phosphoglycerate site. Gly-212 serves as a coordination point for ADP. CDP is bound at residue Gly-212. Residues Ala-213 and Lys-214 each contribute to the AMP site. Residue Ala-213 coordinates ATP. Ala-213 is a binding site for Mg(2+). Mg(2+)-binding residues include Ala-216 and Asp-217. Asp-217 provides a ligand contact to CDP. An AMP-binding site is contributed by Lys-218. Lys-218 is an ATP binding site. Gly-236 provides a ligand contact to ADP. A CDP-binding site is contributed by Gly-236. Gly-237 and Gly-311 together coordinate AMP. ATP is bound by residues Gly-237 and Gly-311. Positions 336 and 341 each coordinate CDP. An ADP-binding site is contributed by Phe-341. Glu-342 serves as a coordination point for AMP. Positions 342, 373, and 374 each coordinate ATP. Asp-373 is a binding site for Mg(2+).

It belongs to the phosphoglycerate kinase family. As to quaternary structure, monomer. It depends on Mg(2+) as a cofactor.

The protein resides in the cytoplasm. It is found in the mitochondrion. The enzyme catalyses (2R)-3-phosphoglycerate + ATP = (2R)-3-phospho-glyceroyl phosphate + ADP. It participates in carbohydrate degradation; glycolysis; pyruvate from D-glyceraldehyde 3-phosphate: step 2/5. Catalyzes one of the two ATP producing reactions in the glycolytic pathway via the reversible conversion of 1,3-diphosphoglycerate to 3-phosphoglycerate. Both L- and D- forms of purine and pyrimidine nucleotides can be used as substrates, but the activity is much lower on pyrimidines. Negatively regulates the biosynthesis of acetyl-CoA from pyruvate in the mitochondrion. The chain is Phosphoglycerate kinase (PGK) from Kluyveromyces lactis (strain ATCC 8585 / CBS 2359 / DSM 70799 / NBRC 1267 / NRRL Y-1140 / WM37) (Yeast).